A 453-amino-acid chain; its full sequence is MDVRGKRVLVVGLGKSGIASATFLQAQGAKVTVSDSKSEAQLRQEIPLLLDKGITVETGHHGERTFRDQDLIVISPGVPFDQPQLEQARKQGIPVIGEIELAAQFVPGHVIAITGSNGKTTTTSLCGDILQSGGKKTLVGGNIGTPAISFAQLANDDTWSVLEISSFQLETIERFRPEIAAILNITPDHLDRHGTFEKYAAAKERIFENQREHDFAILNADNEPCVEIAKRVKSQVLWFSRQHEVKHGTFVREDKIYFRDPKGEREIMPVADMLLKGAHNVENVLAAVCVGVAASVAPEQIRKAVSQFKAVEHRLEYTATVKGVDYYNDSKATNVDATIKALESFSKGVHLILGGKDKGSPYTVLNDLLHERAKTVYTIGAAAAKIEAEVKGVEVVHAETLENAVKLASQKAVKGDVVLLAPACASFDQFQSYEHRGRIFKELVRKMAEQEKK.

115–121 contacts ATP; the sequence is GSNGKTT.

It belongs to the MurCDEF family.

The protein localises to the cytoplasm. The enzyme catalyses UDP-N-acetyl-alpha-D-muramoyl-L-alanine + D-glutamate + ATP = UDP-N-acetyl-alpha-D-muramoyl-L-alanyl-D-glutamate + ADP + phosphate + H(+). The protein operates within cell wall biogenesis; peptidoglycan biosynthesis. Functionally, cell wall formation. Catalyzes the addition of glutamate to the nucleotide precursor UDP-N-acetylmuramoyl-L-alanine (UMA). The protein is UDP-N-acetylmuramoylalanine--D-glutamate ligase of Koribacter versatilis (strain Ellin345).